The chain runs to 279 residues: 4-diphosphocytidyl-2-C-methyl-D-erythritol kinase (279 aa).

Residue lysine 9 is part of the active site. 93 to 103 (PMGAGLGGGSS) is an ATP binding site. Aspartate 135 is a catalytic residue.

Belongs to the GHMP kinase family. IspE subfamily.

The catalysed reaction is 4-CDP-2-C-methyl-D-erythritol + ATP = 4-CDP-2-C-methyl-D-erythritol 2-phosphate + ADP + H(+). It functions in the pathway isoprenoid biosynthesis; isopentenyl diphosphate biosynthesis via DXP pathway; isopentenyl diphosphate from 1-deoxy-D-xylulose 5-phosphate: step 3/6. Catalyzes the phosphorylation of the position 2 hydroxy group of 4-diphosphocytidyl-2C-methyl-D-erythritol. The chain is 4-diphosphocytidyl-2-C-methyl-D-erythritol kinase from Acinetobacter baylyi (strain ATCC 33305 / BD413 / ADP1).